The following is a 338-amino-acid chain: Secretory carrier-associated membrane protein 1 (338 aa).

A disordered region spans residues 1–64 (MSDFDSNPFA…NVPNTQPAIM (64 aa)). Ser-2 carries the post-translational modification N-acetylserine. Ser-2 bears the Phosphoserine mark. At 2-155 (SDFDSNPFAD…QKTVKLMYYL (154 aa)) the chain is on the cytoplasmic side. The residue at position 45 (Thr-45) is a Phosphothreonine. A helical transmembrane segment spans residues 156–176 (WMFHAVTLFLNIFGCLAWFCV). Residues 177–181 (DSSRA) are Lumenal-facing. The helical transmembrane segment at 182–202 (VDFGLSILWFLLFTPCSFVCW) threads the bilayer. The Cytoplasmic portion of the chain corresponds to 203–218 (YRPLYGAFRSDSSFRF). Residues 219–239 (FVFFFVYICQFAVHVLQAAGF) traverse the membrane as a helical segment. Residues 240 to 261 (HNWGNCGWISSLTGLNKNIPVG) are Lumenal-facing. A helical transmembrane segment spans residues 262–282 (IMMIIIAALFTASAVISLVMF). The Cytoplasmic segment spans residues 283–338 (KKVHGLYRTTGASFEKAQQEFATGVMSNKTVQTAAANAASTAATSAAQNAFKGNQM).

The protein belongs to the SCAMP family. Interacts with SYNRG, ITSN1 and SLC9A7.

The protein localises to the golgi apparatus. It localises to the trans-Golgi network membrane. The protein resides in the recycling endosome membrane. Its function is as follows. Functions in post-Golgi recycling pathways. Acts as a recycling carrier to the cell surface. The polypeptide is Secretory carrier-associated membrane protein 1 (Scamp1) (Mus musculus (Mouse)).